The following is a 246-amino-acid chain: Mast cell protease 2 (246 aa).

Residues 1 to 19 (MHRPPLPLVLLLLCCRAQA) form the signal peptide. The propeptide at 20-21 (GE) is activation peptide. The region spanning 22–244 (IIGGTESKPH…YRPWIDEVLK (223 aa)) is the Peptidase S1 domain. An intrachain disulfide couples Cys-51 to Cys-67. Catalysis depends on charge relay system residues His-66 and Asp-109. Residue Asn-120 is glycosylated (N-linked (GlcNAc...) asparagine). Cystine bridges form between Cys-143–Cys-208 and Cys-174–Cys-187. Ser-202 functions as the Charge relay system in the catalytic mechanism.

Belongs to the peptidase S1 family. Granzyme subfamily.

The protein localises to the secreted. Its subcellular location is the cytoplasmic granule. In terms of biological role, putative mast cell chymase. The polypeptide is Mast cell protease 2 (Ovis aries (Sheep)).